The chain runs to 551 residues: Cleavage and polyadenylation specificity factor subunit 6 (551 aa).

Residues 1 to 213 (MADGVDHIDI…RGRFPGAVPG (213 aa)) are necessary for interaction with NXF1. In terms of domain architecture, RRM spans 81–161 (IALYIGNLTW…QNPVVTPCNK (81 aa)). The necessary for interaction with NUDT21/CPSF5 stretch occupies residues 81–161 (IALYIGNLTW…QNPVVTPCNK (81 aa)). Positions 81–161 (IALYIGNLTW…QNPVVTPCNK (81 aa)) are necessary for nuclear paraspeckles localization. Thr-157 bears the Phosphothreonine mark. Positions 169–180 (MQSRKTTQSGQM) are enriched in polar residues. Disordered stretches follow at residues 169–411 (MQSR…PLSE) and 477–551 (LHGI…YRHR). The GAR signature appears at 202 to 206 (RGRGR). Positions 207-219 (FPGAVPGGDRFPG) are enriched in low complexity. 3 stretches are compositionally biased toward pro residues: residues 220-265 (PAGP…PLAG), 285-366 (GQPP…PPPT), and 377-388 (GPPPTDPYGRPP). Basic and acidic residues predominate over residues 389–404 (PYDRGDYGPPGREMDT). Thr-404 and Thr-407 each carry phosphothreonine. Positions 404–551 (TARTPLSEAE…RDREREYRHR (148 aa)) are sufficient for nuclear speckle localization. The interval 405 to 551 (ARTPLSEAEF…RDREREYRHR (147 aa)) is necessary for RNA-binding. A necessary for interaction with SRSF3, SRSF7 and TRA2B/SFRS10 region spans residues 481–551 (ESKSYGSGSR…RDREREYRHR (71 aa)). Over residues 489–503 (SRRERSRERDHSRSR) the composition is skewed to basic and acidic residues. The segment at 490–551 (RRERSRERDH…RDREREYRHR (62 aa)) is arg/Ser-rich domain. Phosphoserine is present on residues Ser-494, Ser-500, Ser-511, Ser-513, and Ser-525. A compositionally biased stretch (basic residues) spans 504-514 (EKSRRHKSRSR). The interval 510–551 (KSRSRDRHDDYYRERSRERERHRDRDRDRDRERDREREYRHR) is sufficient for nuclear targeting. Residues 515–551 (DRHDDYYRERSRERERHRDRDRDRDRERDREREYRHR) are compositionally biased toward basic and acidic residues.

The protein belongs to the RRM CPSF6/7 family. In terms of assembly, component of the cleavage factor Im (CFIm) complex which is a heterotetramer composed of two subunits of NUDT21/CPSF5 and two subunits of CPSF6 or CPSF7 or a heterodimer of CPSF6 and CPSF7. The cleavage factor Im (CFIm) complex associates with the CPSF and CSTF complexes to promote the assembly of the core mRNA 3'-processing machinery. Associates with the exon junction complex (EJC). Associates with the 80S ribosome particle. Interacts (via the RRM domain) with NUDT21/CPSF5; this interaction is direct and enhances binding to RNA. Interacts (via Arg/Ser-rich domain) with FIP1L1 (preferentially via unphosphorylated form and Arg/Glu/Asp-rich domain); this interaction mediates, at least in part, the interaction between the CFIm and CPSF complexes and may be inhibited by CPSF6 hyper-phosphorylation. Interacts (via N-terminus) with NXF1; this interaction is direct. Interacts with SRSF3. Interacts with SRSF7. Interacts with SNRNP70. Interacts with TRA2B/SFRS10. Interacts with UPF1. Interacts with UPF3B. Interacts with VIRMA. Interacts (via Arg/Ser-rich domain) with TNPO3; promoting nuclear import of CPSF6 independently of its phosphorylation status. Interacts with YTHDC1. Post-translationally, phosphorylated. Phosphorylated in the Arg/Ser-rich domain by SRPK1, in vitro. Symmetrically dimethylated on arginine residues in the GAR motif by PRMT5 in a WDR77- and CLNS1A-dependent manner. Asymmetrically dimethylated on arginine residues in the GAR motif by PRMT1.

It is found in the nucleus. It localises to the nucleoplasm. Its subcellular location is the nucleus speckle. The protein localises to the cytoplasm. Its function is as follows. Component of the cleavage factor Im (CFIm) complex that functions as an activator of the pre-mRNA 3'-end cleavage and polyadenylation processing required for the maturation of pre-mRNA into functional mRNAs. CFIm contributes to the recruitment of multiprotein complexes on specific sequences on the pre-mRNA 3'-end, so called cleavage and polyadenylation signals (pA signals). Most pre-mRNAs contain multiple pA signals, resulting in alternative cleavage and polyadenylation (APA) producing mRNAs with variable 3'-end formation. The CFIm complex acts as a key regulator of cleavage and polyadenylation site choice during APA through its binding to 5'-UGUA-3' elements localized in the 3'-untranslated region (UTR) for a huge number of pre-mRNAs. CPSF6 enhances NUDT21/CPSF5 binding to 5'-UGUA-3' elements localized upstream of pA signals and promotes RNA looping, and hence activates directly the mRNA 3'-processing machinery. Plays a role in mRNA export. This is Cleavage and polyadenylation specificity factor subunit 6 from Bos taurus (Bovine).